The following is a 286-amino-acid chain: Dolichyl-diphosphooligosaccharide--protein glycosyltransferase subunit SWP1 (286 aa).

Residues 1 to 19 (MQFFKTLAALVSCISFVLA) form the signal peptide. The Lumenal portion of the chain corresponds to 20-194 (YVAQDVHVSF…HAEPKRVAKP (175 aa)). The chain crosses the membrane as a helical span at residues 195-215 (IAVIFVLIIFITILSLIVTWL). Residues 216-228 (NSCAAAFNNIPTG) are Cytoplasmic-facing. Residues 229-249 (VTAVYFLGFIATIVGFEVIFA) traverse the membrane as a helical segment. At 250 to 252 (RYY) the chain is on the lumenal side. The helical transmembrane segment at 253-273 (LGTSIFETLFSSLYLGAPGLL) threads the bilayer. At 274 to 286 (TSTKFLRSFGQTI) the chain is on the cytoplasmic side.

This sequence belongs to the SWP1 family. In terms of assembly, component of the oligosaccharyltransferase (OST) complex, which appears to exist in two assemblies comprising OST1, OST2, OST4, OST5, STT3, SWP1, WPB1, and either OST3 or OST6. OST assembly occurs through the formation of 3 subcomplexes. Subcomplex 1 contains OST1 and OST5, subcomplex 2 contains STT3, OST3, and OST4, and subcomplex 3 contains OST2, WBP1, and SWP1. Interacts with SEC61 and SSS1.

The protein resides in the endoplasmic reticulum membrane. Its pathway is protein modification; protein glycosylation. Functionally, subunit of the oligosaccharyl transferase (OST) complex that catalyzes the initial transfer of a defined glycan (Glc(3)Man(9)GlcNAc(2) in eukaryotes) from the lipid carrier dolichol-pyrophosphate to an asparagine residue within an Asn-X-Ser/Thr consensus motif in nascent polypeptide chains, the first step in protein N-glycosylation. N-glycosylation occurs cotranslationally and the complex associates with the Sec61 complex at the channel-forming translocon complex that mediates protein translocation across the endoplasmic reticulum (ER). All subunits are required for a maximal enzyme activity. The sequence is that of Dolichyl-diphosphooligosaccharide--protein glycosyltransferase subunit SWP1 (SWP1) from Saccharomyces cerevisiae (strain ATCC 204508 / S288c) (Baker's yeast).